Reading from the N-terminus, the 310-residue chain is tRNA-cytidine(32) 2-sulfurtransferase (310 aa).

The PP-loop motif motif lies at S58 to S63. [4Fe-4S] cluster is bound by residues C133, C136, and C224.

Belongs to the TtcA family. In terms of assembly, homodimer. Requires Mg(2+) as cofactor. [4Fe-4S] cluster serves as cofactor.

It is found in the cytoplasm. It catalyses the reaction cytidine(32) in tRNA + S-sulfanyl-L-cysteinyl-[cysteine desulfurase] + AH2 + ATP = 2-thiocytidine(32) in tRNA + L-cysteinyl-[cysteine desulfurase] + A + AMP + diphosphate + H(+). It functions in the pathway tRNA modification. Functionally, catalyzes the ATP-dependent 2-thiolation of cytidine in position 32 of tRNA, to form 2-thiocytidine (s(2)C32). The sulfur atoms are provided by the cysteine/cysteine desulfurase (IscS) system. In Paracidovorax citrulli (strain AAC00-1) (Acidovorax citrulli), this protein is tRNA-cytidine(32) 2-sulfurtransferase.